The following is a 107-amino-acid chain: N(4)-acetylcytidine amidohydrolase (107 aa).

The ASCH domain maps to 6-102 (TFYRRFQADI…RLYVISFSLV (97 aa)). The active-site Proton acceptor is Lys-20. The Nucleophile role is filled by Thr-23. Residue Glu-73 is the Proton donor of the active site.

It belongs to the N(4)-acetylcytidine amidohydrolase family.

It catalyses the reaction N(4)-acetylcytidine + H2O = cytidine + acetate + H(+). The enzyme catalyses N(4)-acetyl-2'-deoxycytidine + H2O = 2'-deoxycytidine + acetate + H(+). It carries out the reaction N(4)-acetylcytosine + H2O = cytosine + acetate + H(+). Its function is as follows. Catalyzes the hydrolysis of N(4)-acetylcytidine (ac4C). The chain is N(4)-acetylcytidine amidohydrolase from Edwardsiella ictaluri (strain 93-146).